The primary structure comprises 279 residues: Putative pyruvate, phosphate dikinase regulatory protein (279 aa).

153–160 is an ADP binding site; that stretch reads GVSRTSKT.

This sequence belongs to the pyruvate, phosphate/water dikinase regulatory protein family. PDRP subfamily.

The enzyme catalyses N(tele)-phospho-L-histidyl/L-threonyl-[pyruvate, phosphate dikinase] + ADP = N(tele)-phospho-L-histidyl/O-phospho-L-threonyl-[pyruvate, phosphate dikinase] + AMP + H(+). The catalysed reaction is N(tele)-phospho-L-histidyl/O-phospho-L-threonyl-[pyruvate, phosphate dikinase] + phosphate + H(+) = N(tele)-phospho-L-histidyl/L-threonyl-[pyruvate, phosphate dikinase] + diphosphate. Bifunctional serine/threonine kinase and phosphorylase involved in the regulation of the pyruvate, phosphate dikinase (PPDK) by catalyzing its phosphorylation/dephosphorylation. The polypeptide is Putative pyruvate, phosphate dikinase regulatory protein (Rhodopseudomonas palustris (strain BisB5)).